The primary structure comprises 207 residues: Octanoyltransferase (207 aa).

The BPL/LPL catalytic domain maps to Asp29–Glu204. Residues Arg68 to His75, Ser135 to Gly137, and Gly148 to Ala150 contribute to the substrate site. The active-site Acyl-thioester intermediate is Cys166.

This sequence belongs to the LipB family.

Its subcellular location is the cytoplasm. The catalysed reaction is octanoyl-[ACP] + L-lysyl-[protein] = N(6)-octanoyl-L-lysyl-[protein] + holo-[ACP] + H(+). It functions in the pathway protein modification; protein lipoylation via endogenous pathway; protein N(6)-(lipoyl)lysine from octanoyl-[acyl-carrier-protein]: step 1/2. Catalyzes the transfer of endogenously produced octanoic acid from octanoyl-acyl-carrier-protein onto the lipoyl domains of lipoate-dependent enzymes. Lipoyl-ACP can also act as a substrate although octanoyl-ACP is likely to be the physiological substrate. This Methylococcus capsulatus (strain ATCC 33009 / NCIMB 11132 / Bath) protein is Octanoyltransferase.